Reading from the N-terminus, the 315-residue chain is Ribosomal RNA small subunit methyltransferase H (315 aa).

S-adenosyl-L-methionine is bound by residues Gly35–His37, Asp55, Phe79, Asp101, and Gln108.

This sequence belongs to the methyltransferase superfamily. RsmH family.

The protein resides in the cytoplasm. The catalysed reaction is cytidine(1402) in 16S rRNA + S-adenosyl-L-methionine = N(4)-methylcytidine(1402) in 16S rRNA + S-adenosyl-L-homocysteine + H(+). Specifically methylates the N4 position of cytidine in position 1402 (C1402) of 16S rRNA. The protein is Ribosomal RNA small subunit methyltransferase H of Sodalis glossinidius (strain morsitans).